Here is a 233-residue protein sequence, read N- to C-terminus: Pathogenesis-related thaumatin-like protein 3.2 (233 aa).

The signal sequence occupies residues 1–22 (MARAMHTVWIALVPTLFVFLQG). Intrachain disulfides connect Cys36–Cys232, Cys77–Cys87, Cys92–Cys98, Cys145–Cys221, Cys151–Cys204, Cys159–Cys169, Cys173–Cys182, and Cys183–Cys191. N-linked (GlcNAc...) asparagine glycosylation occurs at Asn195.

The protein belongs to the thaumatin family. As to expression, strongly expressed in roots and in female and male strobili, and, to a lower extent, in cotyledons, leaves, stems and pollen grains.

Its function is as follows. May be involved in disease resistance. This Cryptomeria japonica (Japanese cedar) protein is Pathogenesis-related thaumatin-like protein 3.2.